The chain runs to 269 residues: Tryptophan synthase alpha chain (269 aa).

Catalysis depends on proton acceptor residues glutamate 49 and aspartate 60.

It belongs to the TrpA family. Tetramer of two alpha and two beta chains.

It carries out the reaction (1S,2R)-1-C-(indol-3-yl)glycerol 3-phosphate + L-serine = D-glyceraldehyde 3-phosphate + L-tryptophan + H2O. It functions in the pathway amino-acid biosynthesis; L-tryptophan biosynthesis; L-tryptophan from chorismate: step 5/5. Functionally, the alpha subunit is responsible for the aldol cleavage of indoleglycerol phosphate to indole and glyceraldehyde 3-phosphate. This is Tryptophan synthase alpha chain from Cronobacter sakazakii (strain ATCC BAA-894) (Enterobacter sakazakii).